Consider the following 392-residue polypeptide: S-adenosylmethionine synthase (392 aa).

ATP is bound at residue histidine 17. Aspartate 19 contacts Mg(2+). Position 45 (glutamate 45) interacts with K(+). L-methionine is bound by residues glutamate 58 and glutamine 102. Residues 102–112 are flexible loop; it reads QSADIAQGVDA. Residues 169-171, 235-236, aspartate 244, 250-251, alanine 267, and lysine 271 each bind ATP; these read DAK, KF, and RK. Aspartate 244 serves as a coordination point for L-methionine. Lysine 275 provides a ligand contact to L-methionine.

The protein belongs to the AdoMet synthase family. Homotetramer; dimer of dimers. Mg(2+) is required as a cofactor. The cofactor is K(+).

The protein resides in the cytoplasm. It catalyses the reaction L-methionine + ATP + H2O = S-adenosyl-L-methionine + phosphate + diphosphate. It functions in the pathway amino-acid biosynthesis; S-adenosyl-L-methionine biosynthesis; S-adenosyl-L-methionine from L-methionine: step 1/1. Catalyzes the formation of S-adenosylmethionine (AdoMet) from methionine and ATP. The overall synthetic reaction is composed of two sequential steps, AdoMet formation and the subsequent tripolyphosphate hydrolysis which occurs prior to release of AdoMet from the enzyme. This Methylobacterium sp. (strain 4-46) protein is S-adenosylmethionine synthase.